The chain runs to 439 residues: Trigger factor (439 aa).

A PPIase FKBP-type domain is found at 162–247 (GDRLTLDFIG…LKKVEAMILP (86 aa)).

Belongs to the FKBP-type PPIase family. Tig subfamily.

It is found in the cytoplasm. It carries out the reaction [protein]-peptidylproline (omega=180) = [protein]-peptidylproline (omega=0). Involved in protein export. Acts as a chaperone by maintaining the newly synthesized protein in an open conformation. Functions as a peptidyl-prolyl cis-trans isomerase. The chain is Trigger factor from Dichelobacter nodosus (strain VCS1703A).